We begin with the raw amino-acid sequence, 116 residues long: Large ribosomal subunit protein uL14m (116 aa).

Belongs to the universal ribosomal protein uL14 family.

Its subcellular location is the mitochondrion. In Acanthamoeba polyphaga (Amoeba), this protein is Large ribosomal subunit protein uL14m (RPL14).